Consider the following 193-residue polypeptide: Oleosin S1-2 (193 aa).

An N-acetylalanine modification is found at Ala2. Residues 2–39 (ADVRTHAHQVQVHPLRQHEGGIKVVYPQSGPSSTQVLA) form a polar region. 3 helical membrane passes run 37–57 (VLAVVAGVPVGGTLLTLAGLT), 66–86 (ILAFPLFLIFSPVIVPAAFVI), and 87–107 (GLAMTGFMASGAIGLTGLSSM). Residues 40–113 (VVAGVPVGGT…LSSMSWVLNH (74 aa)) are hydrophobic. Residues 139–193 (AGQRTKDAGQTIEDKAHDVRESKTYDVRDRDTKGHTASGGDRDTKTTREVRVATT) form a disordered region. Basic and acidic residues predominate over residues 142-193 (RTKDAGQTIEDKAHDVRESKTYDVRDRDTKGHTASGGDRDTKTTREVRVATT).

It belongs to the oleosin family.

The protein resides in the lipid droplet. It is found in the membrane. May have a structural role to stabilize the lipid body during desiccation of the seed by preventing coalescence of the oil. Probably interacts with both lipid and phospholipid moieties of lipid bodies. May also provide recognition signals for specific lipase anchorage in lipolysis during seedling growth. The protein is Oleosin S1-2 (S1) of Brassica napus (Rape).